A 217-amino-acid chain; its full sequence is Putative N-acetylmuramoyl-L-alanine amidase (217 aa).

The MurNAc-LAA domain occupies 3-206 (IAIDAGHGGQ…ISKSISIALK (204 aa)).

It belongs to the N-acetylmuramoyl-L-alanine amidase 3 family.

It localises to the secreted. The catalysed reaction is Hydrolyzes the link between N-acetylmuramoyl residues and L-amino acid residues in certain cell-wall glycopeptides.. Its function is as follows. Cell-wall hydrolase involved in septum cleavage during cell division. The polypeptide is Putative N-acetylmuramoyl-L-alanine amidase (amiB) (Buchnera aphidicola subsp. Baizongia pistaciae (strain Bp)).